Reading from the N-terminus, the 234-residue chain is tRNA (guanine-N(1)-)-methyltransferase (234 aa).

Residues glycine 115 and 135-140 (VGDYIL) contribute to the S-adenosyl-L-methionine site.

Belongs to the RNA methyltransferase TrmD family. In terms of assembly, homodimer.

It localises to the cytoplasm. The catalysed reaction is guanosine(37) in tRNA + S-adenosyl-L-methionine = N(1)-methylguanosine(37) in tRNA + S-adenosyl-L-homocysteine + H(+). Functionally, specifically methylates guanosine-37 in various tRNAs. This is tRNA (guanine-N(1)-)-methyltransferase from Rickettsia typhi (strain ATCC VR-144 / Wilmington).